The following is a 443-amino-acid chain: MSVVTERYSRSQADYAAAREVIPGGVNSPVRAFRGVGGIPIFFERGQGAYVWDVDGNRYIDYVLSWGPLLLGHAHPAVVEAITLQAQRGTSFGAPTELETELARLVIELVPSIEQIRFVNSGTEATMSALRLARAATGRRLIVKFNGCYHGHADMLLVQAGSGVATLGLPDSPGVPPSVAAETITIEYNDLDAAAALFANRGAEIAAVIVEPIAANMGFVLPKPGFLSGLRELTQTHGAIFILDEVMTGFRVAAGGAQALWGLDPDLTCLGKVIGGGLPVGAYAGKRQLMQLVAPAGPMYQAGTLSGNPLAMTAGLTTLRTAFGGDAGAFQQAVTRTARLADGLRMLGERYRIPVQVGNVGTMFGCYFLRQEGSQITSYAEAKAYADSQRYARFFWAMADQGIYLAPSQFEAGFLSTAHSDADIDETLAAAEVAFAGLVSSAE.

Lys272 bears the N6-(pyridoxal phosphate)lysine mark.

The protein belongs to the class-III pyridoxal-phosphate-dependent aminotransferase family. HemL subfamily. As to quaternary structure, homodimer. Pyridoxal 5'-phosphate is required as a cofactor.

Its subcellular location is the cytoplasm. It carries out the reaction (S)-4-amino-5-oxopentanoate = 5-aminolevulinate. It participates in porphyrin-containing compound metabolism; protoporphyrin-IX biosynthesis; 5-aminolevulinate from L-glutamyl-tRNA(Glu): step 2/2. It functions in the pathway porphyrin-containing compound metabolism; chlorophyll biosynthesis. The sequence is that of Glutamate-1-semialdehyde 2,1-aminomutase from Chloroflexus aurantiacus (strain ATCC 29366 / DSM 635 / J-10-fl).